The primary structure comprises 88 residues: Large ribosomal subunit protein bL31B (88 aa).

This sequence belongs to the bacterial ribosomal protein bL31 family. Type B subfamily. Part of the 50S ribosomal subunit.

The polypeptide is Large ribosomal subunit protein bL31B (Janthinobacterium sp. (strain Marseille) (Minibacterium massiliensis)).